A 583-amino-acid polypeptide reads, in one-letter code: Chloroplast sensor kinase, chloroplastic (583 aa).

A chloroplast-targeting transit peptide spans 1 to 50 (MSSIYLHGLSRRRRIGSVIVAIYMLDSCGAFLSASGSGRYPGFSYRGLSV). Residues 97–277 (LFQELALSQL…SMDTERAALQ (181 aa)) are GAF. Cys115 lines the [3Fe-4S] cluster pocket. His292 bears the Phosphohistidine; by autocatalysis mark. The disordered stretch occupies residues 412 to 442 (AASGSNGPSNSTTSFSGNGSDVSTYTEDDGA). A compositionally biased stretch (low complexity) spans 414–431 (SGSNGPSNSTTSFSGNGS). The region spanning 447–583 (SSLFSEMDLE…ALDWTLRKHW (137 aa)) is the Histidine kinase domain.

This sequence belongs to the chloroplast sensor kinase protein family. As to quaternary structure, oligomerizes. Requires [3Fe-4S] cluster as cofactor. In terms of processing, autophosphorylates, possibly on His-292.

It localises to the plastid. The protein localises to the chloroplast stroma. The catalysed reaction is ATP + protein L-histidine = ADP + protein N-phospho-L-histidine.. Sensor kinase that senses the plastoquinone (PQ) redox state involved in stoichiometry adjustment of both photosystems (e.g. long-term adaptation via transcriptional regulation of reaction center genes of photosystems I and II) and state transitions (e.g. short-term adaptation involving reversible post-translational phosphorylation of light-harvesting complex II, LHC II), thus linking photosynthesis with gene expression in chloroplasts. Reduced PQ suppresses its autophosphorylation activity. In Phaeodactylum tricornutum (strain CCAP 1055/1), this protein is Chloroplast sensor kinase, chloroplastic.